Here is a 485-residue protein sequence, read N- to C-terminus: Glutamyl-tRNA(Gln) amidotransferase subunit A (485 aa).

Catalysis depends on charge relay system residues Lys-78 and Ser-153. The active-site Acyl-ester intermediate is Ser-177.

It belongs to the amidase family. GatA subfamily. In terms of assembly, heterotrimer of A, B and C subunits.

It carries out the reaction L-glutamyl-tRNA(Gln) + L-glutamine + ATP + H2O = L-glutaminyl-tRNA(Gln) + L-glutamate + ADP + phosphate + H(+). In terms of biological role, allows the formation of correctly charged Gln-tRNA(Gln) through the transamidation of misacylated Glu-tRNA(Gln) in organisms which lack glutaminyl-tRNA synthetase. The reaction takes place in the presence of glutamine and ATP through an activated gamma-phospho-Glu-tRNA(Gln). The polypeptide is Glutamyl-tRNA(Gln) amidotransferase subunit A (Bacillus cereus (strain G9842)).